We begin with the raw amino-acid sequence, 183 residues long: ATP synthase subunit delta (183 aa).

It belongs to the ATPase delta chain family. As to quaternary structure, F-type ATPases have 2 components, F(1) - the catalytic core - and F(0) - the membrane proton channel. F(1) has five subunits: alpha(3), beta(3), gamma(1), delta(1), epsilon(1). F(0) has three main subunits: a(1), b(2) and c(10-14). The alpha and beta chains form an alternating ring which encloses part of the gamma chain. F(1) is attached to F(0) by a central stalk formed by the gamma and epsilon chains, while a peripheral stalk is formed by the delta and b chains.

The protein localises to the cell inner membrane. Its function is as follows. F(1)F(0) ATP synthase produces ATP from ADP in the presence of a proton or sodium gradient. F-type ATPases consist of two structural domains, F(1) containing the extramembraneous catalytic core and F(0) containing the membrane proton channel, linked together by a central stalk and a peripheral stalk. During catalysis, ATP synthesis in the catalytic domain of F(1) is coupled via a rotary mechanism of the central stalk subunits to proton translocation. In terms of biological role, this protein is part of the stalk that links CF(0) to CF(1). It either transmits conformational changes from CF(0) to CF(1) or is implicated in proton conduction. This is ATP synthase subunit delta from Oleidesulfovibrio alaskensis (strain ATCC BAA-1058 / DSM 17464 / G20) (Desulfovibrio alaskensis).